We begin with the raw amino-acid sequence, 365 residues long: Protein dbl-1 (365 aa).

An N-terminal signal peptide occupies residues 1–42; that stretch reads MNDSVRTTTTISSTKSLVHSFQLSAILHLFLLISFTPMSAAA. Residues 43-244 constitute a propeptide that is removed on maturation; the sequence is DQHASHATRR…KRSAQTGNSE (202 aa). N-linked (GlcNAc...) asparagine glycans are attached at residues N110, N143, and N167. Residues 231–259 form a disordered region; that stretch reads SVRRKRSAQTGNSERKNRKKGRKHHNTEA. Residues 246–255 are compositionally biased toward basic residues; the sequence is KNRKKGRKHH. Disulfide bonds link C264-C330, C293-C362, and C297-C364. N306 carries N-linked (GlcNAc...) asparagine glycosylation.

Belongs to the TGF-beta family. Homodimer; disulfide-linked. Interacts with drag-1. As to expression, expressed in embryos just prior to hatching and remains constant in most cells throughout the larval and adult stages. Expressed by AVA command interneurons.

It localises to the secreted. Ligand for the serine/threonine-protein kinase receptor type-1 sma-6 which activates a TGF-beta-like signaling pathway. Multifunctional protein that is involved in body size, male ectodermal patterning, innate immunity, lipid metabolism and neural plasticity. Dose-dependent regulator of body size, probably influencing the sizes of some or all cells rather than their number. Plays a role in patterning of male-specific genital sensilla (simple sense organs), known as rays, and mating-associated structures, spicules. Plays a protective role in response to infection by the Gram-negative bacterium S.marcescens, by activating expression of genes involved in innate immunity. Regulator of lipid homeostasis, acting non cell-autonomously in the hypodermis; partly dependent on the Insulin/IGF-1-like signaling (IIS) mediated pathway. Required for aversive olfactory learning of pathogenic bacteria in adults. Involved in gland cell morphology, possibly via activation of a Smad-independent TGF-beta signaling pathway. Required to oppose the autoregulation of expression of Runt-related transcription factor rnt-1. This is Protein dbl-1 from Caenorhabditis elegans.